The chain runs to 555 residues: Glutamate--tRNA ligase (555 aa).

The short motif at 100–110 is the 'HIGH' region element; the sequence is PNPSGPLHIGH.

It belongs to the class-I aminoacyl-tRNA synthetase family. Glutamate--tRNA ligase type 2 subfamily.

Its subcellular location is the cytoplasm. It catalyses the reaction tRNA(Glu) + L-glutamate + ATP = L-glutamyl-tRNA(Glu) + AMP + diphosphate. Its function is as follows. Catalyzes the attachment of glutamate to tRNA(Glu) in a two-step reaction: glutamate is first activated by ATP to form Glu-AMP and then transferred to the acceptor end of tRNA(Glu). In Methanococcus maripaludis (strain C5 / ATCC BAA-1333), this protein is Glutamate--tRNA ligase.